Reading from the N-terminus, the 420-residue chain is Deoxyribodipyrimidine photo-lyase (420 aa).

Residues 2-124 (GPLLVWHRGD…PLHLLPAPHL (123 aa)) form the Photolyase/cryptochrome alpha/beta domain. The segment at 152–175 (APEALPKGPEEGEIPREDPGLPLP) is disordered. The span at 159 to 170 (GPEEGEIPREDP) shows a compositional bias: basic and acidic residues. Tyrosine 197 is an FAD binding site. Arginine 201 lines the DNA pocket. 209–213 (GSRLS) is an FAD binding site. 2 interaction with DNA regions span residues 244–251 (ELLWRDFS) and 310–311 (NR). 341 to 343 (DGD) lines the FAD pocket. Glutamine 373 is a DNA binding site.

The protein belongs to the DNA photolyase class-1 family. Monomer. The cofactor is FAD.

The enzyme catalyses cyclobutadipyrimidine (in DNA) = 2 pyrimidine residues (in DNA).. In terms of biological role, involved in repair of UV radiation-induced DNA damage. Catalyzes the light-dependent monomerization (300-600 nm) of cyclobutyl pyrimidine dimers (in cis-syn configuration), which are formed between adjacent bases on the same DNA strand upon exposure to ultraviolet radiation. This Thermus thermophilus (strain ATCC BAA-163 / DSM 7039 / HB27) protein is Deoxyribodipyrimidine photo-lyase (phr).